Reading from the N-terminus, the 365-residue chain is tRNA N6-adenosine threonylcarbamoyltransferase (365 aa).

Histidine 119 and histidine 123 together coordinate Fe cation. Substrate-binding positions include 141 to 145 (LVSGG), aspartate 174, glycine 187, and asparagine 288. Aspartate 316 contacts Fe cation.

This sequence belongs to the KAE1 / TsaD family. It depends on Fe(2+) as a cofactor.

It is found in the cytoplasm. It catalyses the reaction L-threonylcarbamoyladenylate + adenosine(37) in tRNA = N(6)-L-threonylcarbamoyladenosine(37) in tRNA + AMP + H(+). Functionally, required for the formation of a threonylcarbamoyl group on adenosine at position 37 (t(6)A37) in tRNAs that read codons beginning with adenine. Is involved in the transfer of the threonylcarbamoyl moiety of threonylcarbamoyl-AMP (TC-AMP) to the N6 group of A37, together with TsaE and TsaB. TsaD likely plays a direct catalytic role in this reaction. The protein is tRNA N6-adenosine threonylcarbamoyltransferase of Rhizobium leguminosarum bv. trifolii (strain WSM2304).